The sequence spans 140 residues: Large ribosomal subunit protein uL11 (140 aa).

The protein belongs to the universal ribosomal protein uL11 family. In terms of assembly, part of the ribosomal stalk of the 50S ribosomal subunit. Interacts with L10 and the large rRNA to form the base of the stalk. L10 forms an elongated spine to which L12 dimers bind in a sequential fashion forming a multimeric L10(L12)X complex. One or more lysine residues are methylated.

In terms of biological role, forms part of the ribosomal stalk which helps the ribosome interact with GTP-bound translation factors. The polypeptide is Large ribosomal subunit protein uL11 (Lawsonia intracellularis (strain PHE/MN1-00)).